The chain runs to 155 residues: MKLHILAVGNKMPDWIKKGYTEYSQRMPKEAEMQLVEIKPEKRIGKKTEQLLQAESERIRIALPPGCHIVVLDESGKQATTVRLAELMTNWRESGRDVTFIIGGADGLHRDIKQIAHEKLALSTMTLPHGLARVLLAEQLYRAFSITRNHPYHRA.

S-adenosyl-L-methionine is bound by residues leucine 72, glycine 103, and 122–127 (LSTMTL).

It belongs to the RNA methyltransferase RlmH family. As to quaternary structure, homodimer.

Its subcellular location is the cytoplasm. It carries out the reaction pseudouridine(1915) in 23S rRNA + S-adenosyl-L-methionine = N(3)-methylpseudouridine(1915) in 23S rRNA + S-adenosyl-L-homocysteine + H(+). Functionally, specifically methylates the pseudouridine at position 1915 (m3Psi1915) in 23S rRNA. The protein is Ribosomal RNA large subunit methyltransferase H of Nitrosomonas eutropha (strain DSM 101675 / C91 / Nm57).